The sequence spans 598 residues: DNA mismatch repair protein MutL (598 aa).

This sequence belongs to the DNA mismatch repair MutL/HexB family.

Functionally, this protein is involved in the repair of mismatches in DNA. It is required for dam-dependent methyl-directed DNA mismatch repair. May act as a 'molecular matchmaker', a protein that promotes the formation of a stable complex between two or more DNA-binding proteins in an ATP-dependent manner without itself being part of a final effector complex. The polypeptide is DNA mismatch repair protein MutL (Geotalea daltonii (strain DSM 22248 / JCM 15807 / FRC-32) (Geobacter daltonii)).